Reading from the N-terminus, the 546-residue chain is Nuclear pore complex protein Nup58 (546 aa).

Tandem repeats lie at residues 22–23 (FG), 36–37 (FG), 45–46 (FG), 64–65 (FG), 73–74 (FG), 82–83 (FG), 92–93 (FG), 101–102 (FG), 110–111 (FG), 119–120 (FG), 128–129 (FG), 137–138 (FG), 146–147 (FG), 155–156 (FG), 166–167 (FG), 197–198 (FG), and 199–200 (FG). A 17 X 2 AA repeats of F-G region spans residues 22-200 (FGARPATTTA…TTAPPAFGFG (179 aa)).

It belongs to the NUP58 family. In terms of assembly, component of the nuclear pore complex. Interacts with Nup54. Interacts (via C-terminus) with fs(1)Yb; this interaction occurs in a RNA-independent manner. Interacts with sbr/nxf1. Interacts with Nxt1. Post-translationally, O-glycosylated; contains O-GlcNAc. O-GlcNAcylation increases with increasing ambient temperature.

It localises to the nucleus. Its subcellular location is the nuclear pore complex. Functionally, component of the nuclear pore complex, a complex required for the trafficking across the nuclear membrane. Together with Nup54, required for transposable element silencing regulation in ovarian follicle cells. By interacting with the nuclear (Nxf1/Nxt1) and cytosolic (fs(1)Yb) components of the flamenco (flam) transcripts processing pathway, enables export and subsequent piRNA production. The chain is Nuclear pore complex protein Nup58 from Drosophila melanogaster (Fruit fly).